The sequence spans 461 residues: Putative aldehyde dehydrogenase FUS7 (461 aa).

220–225 (GSTTTG) contributes to the NAD(+) binding site. Residues glutamate 242 and cysteine 276 contribute to the active site.

It belongs to the aldehyde dehydrogenase family.

It carries out the reaction an aldehyde + NAD(+) + H2O = a carboxylate + NADH + 2 H(+). In terms of biological role, putative aldehyde dehydrogenase; part of the gene cluster that mediates the biosynthesis of the mycotoxin fusarin C. Within the cluster, FUS1, FUS2, FUS8 and FUS9 are sufficient for fusarin production. The other FUS cluster members are not essential for fusarin C biosynthesis. The protein is Putative aldehyde dehydrogenase FUS7 of Gibberella fujikuroi (strain CBS 195.34 / IMI 58289 / NRRL A-6831) (Bakanae and foot rot disease fungus).